The chain runs to 332 residues: L-lactate dehydrogenase (332 aa).

NAD(+) contacts are provided by residues 29–57 and R99; that span reads GQVG…CADK. R106, N138, and R169 together coordinate substrate. NAD(+) is bound at residue N138. Residue H193 is the Proton acceptor of the active site. T248 lines the substrate pocket.

Belongs to the LDH/MDH superfamily. LDH family. As to quaternary structure, homotetramer.

Its subcellular location is the cytoplasm. It catalyses the reaction (S)-lactate + NAD(+) = pyruvate + NADH + H(+). Its pathway is fermentation; pyruvate fermentation to lactate; (S)-lactate from pyruvate: step 1/1. The polypeptide is L-lactate dehydrogenase (Drosophila melanogaster (Fruit fly)).